Here is a 152-residue protein sequence, read N- to C-terminus: MRCPYCQHPDSDVIDTRKLHNGETIRRRRKCEACGRRFTTYERVEMVSITVVKKNGEREPYDREKLMRGVRTACYRRPVPAQALEALANDIEAELMARDEPEVPSSLIGDMVMRRLRAIDDVAYIRFASVYRSFADIGKLREAVDELLGQGH.

A zinc finger lies at 3–34; that stretch reads CPYCQHPDSDVIDTRKLHNGETIRRRRKCEAC. The ATP-cone domain maps to 49 to 139; the sequence is ITVVKKNGER…VYRSFADIGK (91 aa).

This sequence belongs to the NrdR family. The cofactor is Zn(2+).

Negatively regulates transcription of bacterial ribonucleotide reductase nrd genes and operons by binding to NrdR-boxes. The sequence is that of Transcriptional repressor NrdR from Roseiflexus sp. (strain RS-1).